A 196-amino-acid chain; its full sequence is Potassium-transporting ATPase KdpC subunit (196 aa).

Residues 17-37 form a helical membrane-spanning segment; the sequence is LLLLVATAGLGLVYPLAVFAV. Residues 73–93 are disordered; that stretch reads QPRPSAAGDGYDPTASGASNL.

Belongs to the KdpC family. In terms of assembly, the system is composed of three essential subunits: KdpA, KdpB and KdpC.

It is found in the cell membrane. Its function is as follows. Part of the high-affinity ATP-driven potassium transport (or Kdp) system, which catalyzes the hydrolysis of ATP coupled with the electrogenic transport of potassium into the cytoplasm. This subunit acts as a catalytic chaperone that increases the ATP-binding affinity of the ATP-hydrolyzing subunit KdpB by the formation of a transient KdpB/KdpC/ATP ternary complex. In Kineococcus radiotolerans (strain ATCC BAA-149 / DSM 14245 / SRS30216), this protein is Potassium-transporting ATPase KdpC subunit.